A 264-amino-acid polypeptide reads, in one-letter code: Proliferating cell nuclear antigen (264 aa).

Residues 61-80 (RCDRNISMGMNLGNMAKMLK) mediate DNA binding.

Belongs to the PCNA family.

It localises to the nucleus. This protein is an auxiliary protein of DNA polymerase delta and is involved in the control of eukaryotic DNA replication by increasing the polymerase's processibility during elongation of the leading strand. The sequence is that of Proliferating cell nuclear antigen from Daucus carota (Wild carrot).